A 146-amino-acid polypeptide reads, in one-letter code: Aspartate carbamoyltransferase regulatory chain (146 aa).

Positions 102, 107, 131, and 134 each coordinate Zn(2+).

Belongs to the PyrI family. Contains catalytic and regulatory chains. Zn(2+) serves as cofactor.

Functionally, involved in allosteric regulation of aspartate carbamoyltransferase. In Clostridium botulinum (strain Okra / Type B1), this protein is Aspartate carbamoyltransferase regulatory chain.